Reading from the N-terminus, the 407-residue chain is 1-deoxy-D-xylulose 5-phosphate reductoisomerase (407 aa).

Positions 25, 26, 27, 28, 53, and 136 each coordinate NADPH. Position 137 (Lys137) interacts with 1-deoxy-D-xylulose 5-phosphate. NADPH is bound at residue Glu138. Asp162 is a binding site for Mn(2+). 1-deoxy-D-xylulose 5-phosphate-binding residues include Ser163, Glu164, Ser188, and His211. Glu164 is a binding site for Mn(2+). Gly217 serves as a coordination point for NADPH. Ser224, Asn229, Lys230, and Glu233 together coordinate 1-deoxy-D-xylulose 5-phosphate. Residue Glu233 participates in Mn(2+) binding.

Belongs to the DXR family. Mg(2+) serves as cofactor. The cofactor is Mn(2+).

The catalysed reaction is 2-C-methyl-D-erythritol 4-phosphate + NADP(+) = 1-deoxy-D-xylulose 5-phosphate + NADPH + H(+). Its pathway is isoprenoid biosynthesis; isopentenyl diphosphate biosynthesis via DXP pathway; isopentenyl diphosphate from 1-deoxy-D-xylulose 5-phosphate: step 1/6. Catalyzes the NADPH-dependent rearrangement and reduction of 1-deoxy-D-xylulose-5-phosphate (DXP) to 2-C-methyl-D-erythritol 4-phosphate (MEP). This is 1-deoxy-D-xylulose 5-phosphate reductoisomerase from Nitrobacter hamburgensis (strain DSM 10229 / NCIMB 13809 / X14).